A 280-amino-acid chain; its full sequence is Large ribosomal subunit protein uL2 (280 aa).

2 disordered regions span residues 27 to 58 and 226 to 280; these read STPE…GGGH and MNPV…KHGR. Basic residues-rich tracts occupy residues 37 to 58 and 268 to 280; these read LHGH…GGGH and IVRR…KHGR.

Belongs to the universal ribosomal protein uL2 family. In terms of assembly, part of the 50S ribosomal subunit. Forms a bridge to the 30S subunit in the 70S ribosome.

In terms of biological role, one of the primary rRNA binding proteins. Required for association of the 30S and 50S subunits to form the 70S ribosome, for tRNA binding and peptide bond formation. It has been suggested to have peptidyltransferase activity; this is somewhat controversial. Makes several contacts with the 16S rRNA in the 70S ribosome. The chain is Large ribosomal subunit protein uL2 from Mycobacterium ulcerans (strain Agy99).